The sequence spans 864 residues: Coiled-coil and C2 domain-containing protein 1B (864 aa).

Residues 82–154 (QDCMTDMTGE…VNSSVAEIQH (73 aa)) are disordered. Composition is skewed to acidic residues over residues 89–104 (TGED…EELL) and 111–129 (VGEE…EESE). The stretch at 91 to 118 (EDDDDDLEEDEELLAELQDVVGEEEEVE) forms a coiled coil. Residues 142–154 (EQQVNSSVAEIQH) show a composition bias toward polar residues. The stretch at 162-209 (GMLQVLEERIGNYKEAISNAKLSNESAKARRYERGLKTLESMLSAARQ) forms a coiled coil. Residues 218–249 (IPPPVACGKPAVSPTTDVPTTDTSKQGLGDLN) are disordered. Residues 229 to 241 (VSPTTDVPTTDTS) are compositionally biased toward low complexity. Positions 385-412 (VGSLLQALQQRMEKYKSAAQQAKSSGDD) form a coiled coil. 2 disordered regions span residues 441 to 463 (AELP…EEGS) and 478 to 502 (AGED…PTQL). Residues 444–453 (PVPPGFPPLP) are compositionally biased toward pro residues. Coiled-coil stretches lie at residues 464–488 (VEKA…DEDE) and 535–564 (PAVQ…KNDL). The 136-residue stretch at 685-820 (HFEDKTLKIV…ETQCEIREIV (136 aa)) folds into the C2 domain.

The protein belongs to the CC2D1 family.

In Xenopus laevis (African clawed frog), this protein is Coiled-coil and C2 domain-containing protein 1B (cc2d1b).